Consider the following 378-residue polypeptide: Queuine tRNA-ribosyltransferase (378 aa).

The active-site Proton acceptor is Asp-89. Residues 89–93 (DSGGF), Asp-143, Gln-187, and Gly-214 contribute to the substrate site. The interval 245–251 (GVGKPED) is RNA binding. The active-site Nucleophile is the Asp-264. An RNA binding; important for wobble base 34 recognition region spans residues 269-273 (TRNAR). Positions 302, 304, 307, and 333 each coordinate Zn(2+).

Belongs to the queuine tRNA-ribosyltransferase family. In terms of assembly, homodimer. Within each dimer, one monomer is responsible for RNA recognition and catalysis, while the other monomer binds to the replacement base PreQ1. Requires Zn(2+) as cofactor.

It catalyses the reaction 7-aminomethyl-7-carbaguanine + guanosine(34) in tRNA = 7-aminomethyl-7-carbaguanosine(34) in tRNA + guanine. It functions in the pathway tRNA modification; tRNA-queuosine biosynthesis. Catalyzes the base-exchange of a guanine (G) residue with the queuine precursor 7-aminomethyl-7-deazaguanine (PreQ1) at position 34 (anticodon wobble position) in tRNAs with GU(N) anticodons (tRNA-Asp, -Asn, -His and -Tyr). Catalysis occurs through a double-displacement mechanism. The nucleophile active site attacks the C1' of nucleotide 34 to detach the guanine base from the RNA, forming a covalent enzyme-RNA intermediate. The proton acceptor active site deprotonates the incoming PreQ1, allowing a nucleophilic attack on the C1' of the ribose to form the product. After dissociation, two additional enzymatic reactions on the tRNA convert PreQ1 to queuine (Q), resulting in the hypermodified nucleoside queuosine (7-(((4,5-cis-dihydroxy-2-cyclopenten-1-yl)amino)methyl)-7-deazaguanosine). This Aeromonas hydrophila subsp. hydrophila (strain ATCC 7966 / DSM 30187 / BCRC 13018 / CCUG 14551 / JCM 1027 / KCTC 2358 / NCIMB 9240 / NCTC 8049) protein is Queuine tRNA-ribosyltransferase.